The sequence spans 398 residues: Exodeoxyribonuclease 7 large subunit (398 aa).

Belongs to the XseA family. As to quaternary structure, heterooligomer composed of large and small subunits.

The protein resides in the cytoplasm. It carries out the reaction Exonucleolytic cleavage in either 5'- to 3'- or 3'- to 5'-direction to yield nucleoside 5'-phosphates.. Functionally, bidirectionally degrades single-stranded DNA into large acid-insoluble oligonucleotides, which are then degraded further into small acid-soluble oligonucleotides. This is Exodeoxyribonuclease 7 large subunit from Chlorobaculum tepidum (strain ATCC 49652 / DSM 12025 / NBRC 103806 / TLS) (Chlorobium tepidum).